The sequence spans 91 residues: Protein LURE 1.3 (91 aa).

The first 20 residues, 1–20, serve as a signal peptide directing secretion; the sequence is MKLPFIFLITLLIFVSSCTS. A glycan (N-linked (GlcNAc...) asparagine) is linked at Asn24. Disulfide bonds link Cys59–Cys76, Cys62–Cys83, and Cys66–Cys85. The PRK6 binding stretch occupies residues 68 to 88; that stretch reads RRGKYIRTCSFERKLCRCSIS.

It belongs to the DEFL family. As to quaternary structure, binds to PRK6 LRRs. As to expression, expressed in the pistil. Detected exclusively in the synergid cells.

It is found in the secreted. Its function is as follows. Pollen tube attractants guiding pollen tubes to the ovular micropyle. Attracts pollen tubes from both A.thaliana and A.lyrata. This Arabidopsis thaliana (Mouse-ear cress) protein is Protein LURE 1.3.